The primary structure comprises 326 residues: Tagatose 1,6-diphosphate aldolase (326 aa).

This sequence belongs to the aldolase LacD family.

It catalyses the reaction D-tagatofuranose 1,6-bisphosphate = D-glyceraldehyde 3-phosphate + dihydroxyacetone phosphate. The protein operates within carbohydrate metabolism; D-tagatose 6-phosphate degradation; D-glyceraldehyde 3-phosphate and glycerone phosphate from D-tagatose 6-phosphate: step 2/2. This is Tagatose 1,6-diphosphate aldolase from Streptococcus pneumoniae (strain ATCC BAA-255 / R6).